The following is a 238-amino-acid chain: Ribonuclease PH (238 aa).

Residues arginine 86 and 124-126 (GTR) each bind phosphate.

The protein belongs to the RNase PH family. As to quaternary structure, homohexameric ring arranged as a trimer of dimers.

It catalyses the reaction tRNA(n+1) + phosphate = tRNA(n) + a ribonucleoside 5'-diphosphate. In terms of biological role, phosphorolytic 3'-5' exoribonuclease that plays an important role in tRNA 3'-end maturation. Removes nucleotide residues following the 3'-CCA terminus of tRNAs; can also add nucleotides to the ends of RNA molecules by using nucleoside diphosphates as substrates, but this may not be physiologically important. Probably plays a role in initiation of 16S rRNA degradation (leading to ribosome degradation) during starvation. This chain is Ribonuclease PH, found in Hahella chejuensis (strain KCTC 2396).